The sequence spans 147 residues: Large ribosomal subunit protein bL9 (147 aa).

This sequence belongs to the bacterial ribosomal protein bL9 family.

Its function is as follows. Binds to the 23S rRNA. The protein is Large ribosomal subunit protein bL9 of Geotalea daltonii (strain DSM 22248 / JCM 15807 / FRC-32) (Geobacter daltonii).